The primary structure comprises 179 residues: ATP synthase subunit delta (179 aa).

The protein belongs to the ATPase delta chain family. As to quaternary structure, F-type ATPases have 2 components, F(1) - the catalytic core - and F(0) - the membrane proton channel. F(1) has five subunits: alpha(3), beta(3), gamma(1), delta(1), epsilon(1). F(0) has three main subunits: a(1), b(2) and c(10-14). The alpha and beta chains form an alternating ring which encloses part of the gamma chain. F(1) is attached to F(0) by a central stalk formed by the gamma and epsilon chains, while a peripheral stalk is formed by the delta and b chains.

The protein localises to the cell inner membrane. Functionally, f(1)F(0) ATP synthase produces ATP from ADP in the presence of a proton or sodium gradient. F-type ATPases consist of two structural domains, F(1) containing the extramembraneous catalytic core and F(0) containing the membrane proton channel, linked together by a central stalk and a peripheral stalk. During catalysis, ATP synthesis in the catalytic domain of F(1) is coupled via a rotary mechanism of the central stalk subunits to proton translocation. This protein is part of the stalk that links CF(0) to CF(1). It either transmits conformational changes from CF(0) to CF(1) or is implicated in proton conduction. The sequence is that of ATP synthase subunit delta from Bordetella avium (strain 197N).